Consider the following 355-residue polypeptide: Methylxanthine N3-demethylase NdmB (355 aa).

The Rieske domain occupies 19–131; sequence WHPVCTLNEF…CEVKYDIVWV (113 aa). [2Fe-2S] cluster-binding residues include Cys64, His66, Cys87, and His90.

It depends on [2Fe-2S] cluster as a cofactor.

The enzyme catalyses theobromine + NADH + O2 + H(+) = 7-methylxanthine + formaldehyde + NAD(+) + H2O. It carries out the reaction theobromine + NADPH + O2 + H(+) = 7-methylxanthine + formaldehyde + NADP(+) + H2O. It catalyses the reaction 3-methylxanthine + NADH + O2 + H(+) = xanthine + formaldehyde + NAD(+) + H2O. The catalysed reaction is 3-methylxanthine + NADPH + O2 + H(+) = xanthine + formaldehyde + NADP(+) + H2O. In terms of biological role, involved in the caffeine degradation, which is the essential first step for assimilating the carbon and nitrogen in caffeine. Catalyzes the N3-demethylation of theobromine to produce 7-methylxanthine and formaldehyde. Also catalyzes the N3-demethylation of 3-methylxanthine, caffeine, and theophylline to xanthine, paraxanthine, and 1-methylxanthine, respectively. NADH is the preferred substrate. This is Methylxanthine N3-demethylase NdmB (ndmB) from Pseudomonas putida (Arthrobacter siderocapsulatus).